Here is a 216-residue protein sequence, read N- to C-terminus: uncharacterized protein (216 aa).

This sequence belongs to the channel forming colicin family.

This is an uncharacterized protein from Escherichia coli.